An 83-amino-acid polypeptide reads, in one-letter code: RNA-binding protein Hfq (83 aa).

The 61-residue stretch at 11–71 folds into the Sm domain; the sequence is DTFLNFVRKN…ISTIMPGQPI (61 aa).

The protein belongs to the Hfq family. Homohexamer.

Its function is as follows. RNA chaperone that binds small regulatory RNA (sRNAs) and mRNAs to facilitate mRNA translational regulation in response to envelope stress, environmental stress and changes in metabolite concentrations. Also binds with high specificity to tRNAs. This Methylocella silvestris (strain DSM 15510 / CIP 108128 / LMG 27833 / NCIMB 13906 / BL2) protein is RNA-binding protein Hfq.